We begin with the raw amino-acid sequence, 304 residues long: Malate dehydrogenase (304 aa).

Residues 8 to 14 and Asp34 each bind NAD(+); that span reads GAAGTVG. The substrate site is built by Arg83 and Arg89. Residues Asn96 and 119–121 contribute to the NAD(+) site; that span reads TSN. Substrate-binding residues include Asn121 and Arg152. Catalysis depends on His176, which acts as the Proton acceptor.

The protein belongs to the LDH/MDH superfamily.

It carries out the reaction (S)-malate + NAD(+) = oxaloacetate + NADH + H(+). Its function is as follows. Catalyzes the reversible oxidation of malate to oxaloacetate. The protein is Malate dehydrogenase (mdh) of Natronomonas pharaonis (strain ATCC 35678 / DSM 2160 / CIP 103997 / JCM 8858 / NBRC 14720 / NCIMB 2260 / Gabara) (Halobacterium pharaonis).